We begin with the raw amino-acid sequence, 473 residues long: Putative protein TIC 214 C-terminal part (473 aa).

The protein belongs to the TIC214 family. In terms of assembly, part of the Tic complex.

The protein localises to the plastid. The protein resides in the chloroplast. Involved in protein precursor import into chloroplasts. May be part of an intermediate translocation complex acting as a protein-conducting channel at the inner envelope. The polypeptide is Putative protein TIC 214 C-terminal part (Anthoceros angustus (Hornwort)).